The sequence spans 22 residues: Mu-conotoxin CnIIIA (22 aa).

3 disulfide bridges follow: Cys3–Cys15, Cys4–Cys21, and Cys10–Cys22. Cys22 carries the cysteine amide modification.

The protein belongs to the conotoxin M superfamily. Expressed by the venom duct. Has not been isolated from the crude venom.

It localises to the secreted. In terms of biological role, mu-conotoxins block voltage-gated sodium channels (Nav). This synthetic toxin moderately blocks rNav1.1/SCN1A, rNav1.2/SCN2A, rNav1.3/SCN3A, rNav1.4/SCN4A, rNav1.5/SCN5A, and mNav1.6/SCN8A. This block is very slowly reversible. Causes seizures when injected intracranially into mice. In Conus consors (Singed cone), this protein is Mu-conotoxin CnIIIA.